Here is a 65-residue protein sequence, read N- to C-terminus: Photosystem II reaction center protein J (65 aa).

Residues 35–55 (LWLVATAGGTAVIFVLGIFFY) traverse the membrane as a helical segment.

It belongs to the PsbJ family. PSII is composed of 1 copy each of membrane proteins PsbA, PsbB, PsbC, PsbD, PsbE, PsbF, PsbH, PsbI, PsbJ, PsbK, PsbL, PsbM, PsbT, PsbX, PsbY, Psb30/Ycf12, peripheral proteins PsbO, CyanoQ (PsbQ), PsbU, PsbV and a large number of cofactors. It forms dimeric complexes.

The protein localises to the cellular thylakoid membrane. One of the components of the core complex of photosystem II (PSII). PSII is a light-driven water:plastoquinone oxidoreductase that uses light energy to abstract electrons from H(2)O, generating O(2) and a proton gradient subsequently used for ATP formation. It consists of a core antenna complex that captures photons, and an electron transfer chain that converts photonic excitation into a charge separation. The protein is Photosystem II reaction center protein J of Prochlorococcus marinus (strain NATL2A).